Reading from the N-terminus, the 193-residue chain is Ion-translocating oxidoreductase complex subunit B (193 aa).

Residues 1 to 26 (MSTMLIAVILLTLLALFFGVLLGFAA) form a hydrophobic region. Residues 32–90 (EGNPIVDELEAILPQTQCGQCGYPGCRPYAEAIANGDKVNKCPPGGTATMEKLASLMGV) enclose the 4Fe-4S domain. [4Fe-4S] cluster is bound by residues cysteine 49, cysteine 52, cysteine 57, cysteine 73, cysteine 114, cysteine 117, cysteine 120, cysteine 124, cysteine 144, cysteine 147, cysteine 150, and cysteine 154. 4Fe-4S ferredoxin-type domains are found at residues 105-134 (KVAY…GAGK) and 136-164 (MHTV…MVPV).

The protein belongs to the 4Fe4S bacterial-type ferredoxin family. RnfB subfamily. The complex is composed of six subunits: RnfA, RnfB, RnfC, RnfD, RnfE and RnfG. The cofactor is [4Fe-4S] cluster.

The protein localises to the cell inner membrane. Part of a membrane-bound complex that couples electron transfer with translocation of ions across the membrane. The protein is Ion-translocating oxidoreductase complex subunit B of Shewanella oneidensis (strain ATCC 700550 / JCM 31522 / CIP 106686 / LMG 19005 / NCIMB 14063 / MR-1).